We begin with the raw amino-acid sequence, 498 residues long: ATP synthase subunit beta, chloroplastic (498 aa).

Residue 172–179 (GGAGVGKT) coordinates ATP.

This sequence belongs to the ATPase alpha/beta chains family. In terms of assembly, F-type ATPases have 2 components, CF(1) - the catalytic core - and CF(0) - the membrane proton channel. CF(1) has five subunits: alpha(3), beta(3), gamma(1), delta(1), epsilon(1). CF(0) has four main subunits: a(1), b(1), b'(1) and c(9-12).

The protein localises to the plastid. It localises to the chloroplast thylakoid membrane. It catalyses the reaction ATP + H2O + 4 H(+)(in) = ADP + phosphate + 5 H(+)(out). Produces ATP from ADP in the presence of a proton gradient across the membrane. The catalytic sites are hosted primarily by the beta subunits. This Saruma henryi (Upright wild ginger) protein is ATP synthase subunit beta, chloroplastic.